The primary structure comprises 446 residues: Exodeoxyribonuclease 7 large subunit (446 aa).

The protein belongs to the XseA family. In terms of assembly, heterooligomer composed of large and small subunits.

The protein resides in the cytoplasm. The enzyme catalyses Exonucleolytic cleavage in either 5'- to 3'- or 3'- to 5'-direction to yield nucleoside 5'-phosphates.. Bidirectionally degrades single-stranded DNA into large acid-insoluble oligonucleotides, which are then degraded further into small acid-soluble oligonucleotides. This chain is Exodeoxyribonuclease 7 large subunit, found in Geotalea uraniireducens (strain Rf4) (Geobacter uraniireducens).